The chain runs to 541 residues: Tryptophan N-monooxygenase 1 (541 aa).

A helical transmembrane segment spans residues 21–41; the sequence is FSTLYLLSTLQAFVAITLVML. Position 477 (cysteine 477) interacts with heme.

Belongs to the cytochrome P450 family. It depends on heme as a cofactor. Found in all tissues tested. Highest expression in roots, and low expression in stem.

Its subcellular location is the membrane. It carries out the reaction L-tryptophan + 2 reduced [NADPH--hemoprotein reductase] + 2 O2 = (E)-(indol-3-yl)acetaldehyde oxime + 2 oxidized [NADPH--hemoprotein reductase] + CO2 + 3 H2O + 2 H(+). Converts tryptophan to indole-3-acetaldoxime, a precursor for tryptophan-derived glucosinolates and indole-3-acetic acid (IAA). Involved in the biosynthetic pathway to 4-hydroxyindole-3-carbonyl nitrile (4-OH-ICN), a cyanogenic metabolite required for inducible pathogen defense. This is Tryptophan N-monooxygenase 1 (CYP79B2) from Arabidopsis thaliana (Mouse-ear cress).